The sequence spans 178 residues: Fatty-acid and retinol-binding protein 1 (178 aa).

The N-terminal stretch at Met1–Ala16 is a signal peptide. 2 coiled-coil regions span residues Asp67 to Asn89 and Lys130 to Val153.

Belongs to the fatty-acid and retinol-binding protein (FARBP) family. In terms of processing, not glycosylated.

Its subcellular location is the secreted. In terms of biological role, binds retinol and different fatty acids. In Wuchereria bancrofti, this protein is Fatty-acid and retinol-binding protein 1.